Reading from the N-terminus, the 459-residue chain is Serine--tRNA ligase (459 aa).

Thr-254 to Glu-256 contributes to the L-serine binding site. ATP-binding positions include Arg-285–Glu-287 and Val-301. Position 308 (Glu-308) interacts with L-serine. Glu-372–Ser-375 contacts ATP. An L-serine-binding site is contributed by Thr-408.

The protein belongs to the class-II aminoacyl-tRNA synthetase family. Type-1 seryl-tRNA synthetase subfamily. In terms of assembly, homodimer. The tRNA molecule binds across the dimer.

The protein resides in the cytoplasm. It carries out the reaction tRNA(Ser) + L-serine + ATP = L-seryl-tRNA(Ser) + AMP + diphosphate + H(+). It catalyses the reaction tRNA(Sec) + L-serine + ATP = L-seryl-tRNA(Sec) + AMP + diphosphate + H(+). Its pathway is aminoacyl-tRNA biosynthesis; selenocysteinyl-tRNA(Sec) biosynthesis; L-seryl-tRNA(Sec) from L-serine and tRNA(Sec): step 1/1. Catalyzes the attachment of serine to tRNA(Ser). Is also able to aminoacylate tRNA(Sec) with serine, to form the misacylated tRNA L-seryl-tRNA(Sec), which will be further converted into selenocysteinyl-tRNA(Sec). The protein is Serine--tRNA ligase of Desulfurococcus amylolyticus (strain DSM 18924 / JCM 16383 / VKM B-2413 / 1221n) (Desulfurococcus kamchatkensis).